A 1093-amino-acid chain; its full sequence is Carbamoyl phosphate synthase large chain (1093 aa).

The interval 1 to 412 (MPRRNDIRKI…SLMKALRSLE (412 aa)) is carboxyphosphate synthetic domain. Positions 139, 179, 185, 186, 218, 220, 225, 251, 252, 253, 295, and 309 each coordinate ATP. The ATP-grasp 1 domain occupies 143 to 338 (KDAMTRIGLD…IAKIAAKLAV (196 aa)). Residues Gln-295, Glu-309, and Asn-311 each coordinate Mg(2+). Mn(2+) contacts are provided by Gln-295, Glu-309, and Asn-311. The interval 413–560 (TGKRVGAEVL…YSSYEEEDEA (148 aa)) is oligomerization domain. The segment at 561–952 (PQTDKRKVII…AFAKAQLSAG (392 aa)) is carbamoyl phosphate synthetic domain. The region spanning 689–880 (GKLLEQLQIP…LAKIASRLMT (192 aa)) is the ATP-grasp 2 domain. ATP-binding residues include Arg-725, His-764, Leu-766, Glu-771, Gly-796, Ile-797, His-798, Ser-799, Gln-839, and Glu-851. 3 residues coordinate Mg(2+): Gln-839, Glu-851, and Asn-853. Positions 839, 851, and 853 each coordinate Mn(2+). The 141-residue stretch at 953–1093 (LILPSSGTVF…QLLHAGHAVK (141 aa)) folds into the MGS-like domain. Residues 953 to 1093 (LILPSSGTVF…QLLHAGHAVK (141 aa)) form an allosteric domain region.

This sequence belongs to the CarB family. As to quaternary structure, composed of two chains; the small (or glutamine) chain promotes the hydrolysis of glutamine to ammonia, which is used by the large (or ammonia) chain to synthesize carbamoyl phosphate. Tetramer of heterodimers (alpha,beta)4. The cofactor is Mg(2+). Requires Mn(2+) as cofactor.

It catalyses the reaction hydrogencarbonate + L-glutamine + 2 ATP + H2O = carbamoyl phosphate + L-glutamate + 2 ADP + phosphate + 2 H(+). It carries out the reaction hydrogencarbonate + NH4(+) + 2 ATP = carbamoyl phosphate + 2 ADP + phosphate + 2 H(+). It participates in amino-acid biosynthesis; L-arginine biosynthesis; carbamoyl phosphate from bicarbonate: step 1/1. Its pathway is pyrimidine metabolism; UMP biosynthesis via de novo pathway; (S)-dihydroorotate from bicarbonate: step 1/3. Its function is as follows. Large subunit of the glutamine-dependent carbamoyl phosphate synthetase (CPSase). CPSase catalyzes the formation of carbamoyl phosphate from the ammonia moiety of glutamine, carbonate, and phosphate donated by ATP, constituting the first step of 2 biosynthetic pathways, one leading to arginine and/or urea and the other to pyrimidine nucleotides. The large subunit (synthetase) binds the substrates ammonia (free or transferred from glutamine from the small subunit), hydrogencarbonate and ATP and carries out an ATP-coupled ligase reaction, activating hydrogencarbonate by forming carboxy phosphate which reacts with ammonia to form carbamoyl phosphate. In Acidobacterium capsulatum (strain ATCC 51196 / DSM 11244 / BCRC 80197 / JCM 7670 / NBRC 15755 / NCIMB 13165 / 161), this protein is Carbamoyl phosphate synthase large chain.